Reading from the N-terminus, the 819-residue chain is Protein EFR3 homolog A (819 aa).

The tract at residues 210–230 (DTDSRTGPPASPTTGDKEENP) is disordered.

This sequence belongs to the EFR3 family. As to quaternary structure, component of a phosphatidylinositol 4-kinase (PI4K) complex. Palmitoylated at its N-terminus, anchoring the protein to the plasma membrane.

It localises to the cell membrane. Its function is as follows. Component of a complex required to localize phosphatidylinositol 4-kinase (PI4K) to the plasma membrane. The complex acts as a regulator of phosphatidylinositol 4-phosphate (PtdIns(4)P) synthesis. In the complex, efr3a probably acts as the membrane-anchoring component. This is Protein EFR3 homolog A (efr3a) from Xenopus laevis (African clawed frog).